Here is a 514-residue protein sequence, read N- to C-terminus: Thymus-specific serine protease (514 aa).

The signal sequence occupies residues 1–24 (MAVWLAQWLGPLLLVSLWGLLAPA). Residues Asn70 and Asn172 are each glycosylated (N-linked (GlcNAc...) asparagine). Ser185 acts as the Charge relay system in catalysis. A glycan (N-linked (GlcNAc...) asparagine) is linked at Asn321. Catalysis depends on charge relay system residues Asp447 and His472.

The protein belongs to the peptidase S28 family. In terms of tissue distribution, expressed predominantly in cortical thymic epithelial cells.

The protein localises to the cytoplasmic vesicle. Functionally, protease that may play a role in T-cell development. The chain is Thymus-specific serine protease (PRSS16) from Homo sapiens (Human).